Reading from the N-terminus, the 445-residue chain is Glutamyl-tRNA(Gln) amidotransferase subunit D (445 aa).

One can recognise an Asparaginase/glutaminase domain in the interval 93–425 (SEIKIISTGG…EKIRSLMISN (333 aa)). Residues Thr103, Thr179, Asp180, and Lys258 contribute to the active site.

Belongs to the asparaginase 1 family. GatD subfamily. In terms of assembly, heterodimer of GatD and GatE.

The enzyme catalyses L-glutamyl-tRNA(Gln) + L-glutamine + ATP + H2O = L-glutaminyl-tRNA(Gln) + L-glutamate + ADP + phosphate + H(+). In terms of biological role, allows the formation of correctly charged Gln-tRNA(Gln) through the transamidation of misacylated Glu-tRNA(Gln) in organisms which lack glutaminyl-tRNA synthetase. The reaction takes place in the presence of glutamine and ATP through an activated gamma-phospho-Glu-tRNA(Gln). The GatDE system is specific for glutamate and does not act on aspartate. In Saccharolobus islandicus (strain L.S.2.15 / Lassen #1) (Sulfolobus islandicus), this protein is Glutamyl-tRNA(Gln) amidotransferase subunit D.